A 298-amino-acid chain; its full sequence is GTP-binding protein REM 1 (298 aa).

A disordered region spans residues Met1 to Ser73. Polar residues predominate over residues Thr35–Pro55. Ser51 is modified (phosphoserine). Over residues Pro63 to Ser73 the composition is skewed to low complexity. GTP is bound by residues Gly87 to Thr94 and Asn195 to Asp198. The interval Ala268–Ala287 is calmodulin-binding.

This sequence belongs to the small GTPase superfamily. RGK family. As to quaternary structure, in vitro, interacts with calmodulin in a calcium-dependent manner. In terms of tissue distribution, most highly expressed in the endothelial lining of the blood vessels in uterus and heart. Lower levels found in spleen, lymph node, kidney and testis. Also found in cells with secretory function such as the islets of Langerhans, lobule/duct epithelium in the breast, bile duct epithelium in the liver, surface epithelium in the endometrial glands of the uterus, colon mucosa and acinar cells in the pancreas and the prostate.

Its function is as follows. Promotes endothelial cell sprouting and actin cytoskeletal reorganization. May be involved in angiogenesis. May function in Ca(2+) signaling. The polypeptide is GTP-binding protein REM 1 (REM1) (Homo sapiens (Human)).